A 90-amino-acid chain; its full sequence is Large ribosomal subunit protein eL31 (90 aa).

The protein belongs to the eukaryotic ribosomal protein eL31 family.

This Natronomonas pharaonis (strain ATCC 35678 / DSM 2160 / CIP 103997 / JCM 8858 / NBRC 14720 / NCIMB 2260 / Gabara) (Halobacterium pharaonis) protein is Large ribosomal subunit protein eL31.